A 407-amino-acid chain; its full sequence is Dephospho-CoA kinase (407 aa).

Positions 3–201 (RIGLTGGIGA…ERIVPFAHNL (199 aa)) constitute a DPCK domain. 11–16 (GAGKSA) is a binding site for ATP. The segment at 196-407 (PFAHNLSTRQ…DWADSTGWKP (212 aa)) is UPF0157.

This sequence in the N-terminal section; belongs to the CoaE family. It in the C-terminal section; belongs to the UPF0157 (GrpB) family.

It localises to the cytoplasm. It catalyses the reaction 3'-dephospho-CoA + ATP = ADP + CoA + H(+). Its pathway is cofactor biosynthesis; coenzyme A biosynthesis; CoA from (R)-pantothenate: step 5/5. Its function is as follows. Catalyzes the phosphorylation of the 3'-hydroxyl group of dephosphocoenzyme A to form coenzyme A. The polypeptide is Dephospho-CoA kinase (Mycolicibacterium paratuberculosis (strain ATCC BAA-968 / K-10) (Mycobacterium paratuberculosis)).